The primary structure comprises 758 residues: Protein hunchback (758 aa).

Disordered stretches follow at residues 30–51 (EPGH…PIPS) and 172–214 (EKLQ…EDMK). Positions 39–51 (SVASSPRQSPIPS) are enriched in polar residues. A Phosphothreonine modification is found at Thr-178. Phosphoserine is present on residues Ser-188, Ser-207, Ser-209, and Ser-210. Over residues 198 to 214 (EPEKEHDQMSNSSEDMK) the composition is skewed to basic and acidic residues. C2H2-type zinc fingers lie at residues 240–262 (YKCK…TRTH), 269–291 (LQCP…IRKH), 297–319 (FQCD…RKSH), and 325–349 (YRCA…KYGH). Disordered stretches follow at residues 365-416 (LVID…PVAT) and 513-536 (QLQQ…YERK). Low complexity-rich tracts occupy residues 398–415 (VAAV…QPVA) and 513–522 (QLQQQNQQQS). Over residues 523 to 532 (DNEEEEQDDE) the composition is skewed to acidic residues. Phosphoserine is present on residues Ser-537 and Ser-540. Positions 603 to 695 (MTSPEQLKVP…TTSAVAAPPS (93 aa)) are disordered. Residues 652–695 (ANTSASSTASSSGNSSNASSNSNGNSSSNSSSNGTTSAVAAPPS) are compositionally biased toward low complexity. 2 consecutive C2H2-type zinc fingers follow at residues 705–727 (YECK…MGYH) and 733–757 (FKCN…RNAH).

It belongs to the hunchback C2H2-type zinc-finger protein family. In embryo, expression of maternal transcript is highest in anterior region. Zygotic transcript is expressed in anterior region until the beginning of gastrulation and in posterior region until early gastrulation. After this, it is expressed in developing nervous system.

The protein resides in the nucleus. In terms of biological role, gap class segmentation protein that controls development of head structures. This is Protein hunchback from Drosophila melanogaster (Fruit fly).